A 201-amino-acid polypeptide reads, in one-letter code: MNSNIIKSIDIIPNNNNNNNNSVSTVNTNSSVINNNNNNNYNNNSISNGNNERIKVFIVHGHNNIVREKVSKFLFEMGFEPILLFEKPNNGQTIIEKLEKEISNCKFGIVIMSPDNKAFTKKDSNSDYVEIAYPRLNVVFEFGYLIGKFGRSNVIYLSVPYNGKSQNYDLPSDLLGYVWINYTEDLKELENEINFGNYKKL.

The TIR domain maps to 52-186 (ERIKVFIVHG…YVWINYTEDL (135 aa)).

In Dictyostelium discoideum (Social amoeba), this protein is Protein tirC (tirC).